Here is a 413-residue protein sequence, read N- to C-terminus: Zeaxanthin glucosyltransferase (413 aa).

Belongs to the UDP-glycosyltransferase family.

It carries out the reaction all-trans-zeaxanthin + 2 UDP-alpha-D-glucose = zeaxanthin bis(beta-D-glucoside) + 2 UDP + 2 H(+). Its pathway is carotenoid biosynthesis; zeaxanthin diglucoside biosynthesis. In terms of biological role, catalyzes the glycosylation reaction which converts zeaxanthin to zeaxanthin bis(beta-D-glucoside). The reaction proceeds in two steps with the monoglucoside as an intermediate. In Pseudescherichia vulneris (Escherichia vulneris), this protein is Zeaxanthin glucosyltransferase (crtX).